A 509-amino-acid chain; its full sequence is 2-succinyl-5-enolpyruvyl-6-hydroxy-3-cyclohexene-1-carboxylate synthase (509 aa).

It belongs to the TPP enzyme family. MenD subfamily. In terms of assembly, homodimer. Requires Mg(2+) as cofactor. Mn(2+) serves as cofactor. It depends on thiamine diphosphate as a cofactor.

The enzyme catalyses isochorismate + 2-oxoglutarate + H(+) = 5-enolpyruvoyl-6-hydroxy-2-succinyl-cyclohex-3-ene-1-carboxylate + CO2. Its pathway is quinol/quinone metabolism; 1,4-dihydroxy-2-naphthoate biosynthesis; 1,4-dihydroxy-2-naphthoate from chorismate: step 2/7. It participates in quinol/quinone metabolism; menaquinone biosynthesis. Its function is as follows. Catalyzes the thiamine diphosphate-dependent decarboxylation of 2-oxoglutarate and the subsequent addition of the resulting succinic semialdehyde-thiamine pyrophosphate anion to isochorismate to yield 2-succinyl-5-enolpyruvyl-6-hydroxy-3-cyclohexene-1-carboxylate (SEPHCHC). This Corynebacterium diphtheriae (strain ATCC 700971 / NCTC 13129 / Biotype gravis) protein is 2-succinyl-5-enolpyruvyl-6-hydroxy-3-cyclohexene-1-carboxylate synthase.